Reading from the N-terminus, the 1086-residue chain is NAD(P) transhydrogenase, mitochondrial (1086 aa).

The N-terminal 43 residues, 1-43, are a transit peptide targeting the mitochondrion; the sequence is MANLLKTVVTGCSCPFLSNLGSCKVLPGKKNFLRTFHTHRILW. Over 44-474 the chain is Mitochondrial matrix; the sequence is CSAPVKPGIP…TITPFRKTMT (431 aa). Lys-70 bears the N6-acetyllysine mark. At Lys-117 the chain carries N6-succinyllysine. An NAD(+)-binding site is contributed by 182 to 184; it reads RVT. Lys-224 is modified (N6-succinyllysine). NAD(+) contacts are provided by residues Val-237, 257–259, and Gly-287; that span reads DTR. The residue at position 294 (Lys-294) is an N6-succinyllysine. NAD(+) is bound by residues Glu-300 and Leu-319. Lys-331 carries the post-translational modification N6-succinyllysine. An N6-acetyllysine modification is found at Lys-397. Helical transmembrane passes span 475–493, 501–521, 527–546, and 558–578; these read SASVYTAGLTGILGLGIAA, MVTTFGLAGIVGYHTVWGVTP, LMSVTNAISGLTAVGGLVLM, and GLAALATFISSVNIAGGFLVT. Over 579–595 the chain is Mitochondrial matrix; sequence QRMLDMFKRPTDPPEYN. 5 consecutive transmembrane segments (helical) span residues 596-616, 622-642, 646-666, 672-691, and 702-722; these read YLYLLPAGTFVGGYLASLYSG, IMYLGSGLCCVGALAGLSTQG, LGNALGMIGVAGGLAATLGGL, LLAQMSGAMALGGTIGLTIA, and LVAAFHSLVGLAAVLTCIAEY. Over 723 to 739 the chain is Cytoplasmic; that stretch reads IIEYPHFATDAAANLTK. Transmembrane regions (helical) follow at residues 740-760, 778-797, 801-819, 833-853, and 857-879; these read IVAYLGTYIGGVTFSGSLVAY, HLLNAGLLAGSVGGIIPFMM, FTTGITCLGSVSALSAVMG, VVITVLNSYSGWALCAEGFLL, and LLTIVGALIGSSGAILSYIMCVA. Residues 880–1086 lie on the Mitochondrial matrix side of the membrane; it reads MNRSLANVIL…QAKVRESYQK (207 aa). NADP(+) is bound by residues Tyr-933, 965–970, 1009–1011, 1026–1027, 1042–1049, and 1068–1069; these read VAGRMP, NDT, GM, KRSLGVGY, and DA. Lys-1079 is modified (N6-succinyllysine).

In the N-terminal section; belongs to the AlaDH/PNT family. It in the C-terminal section; belongs to the PNT beta subunit family. In terms of assembly, homodimer.

The protein resides in the mitochondrion inner membrane. The catalysed reaction is NAD(+) + NADPH + H(+)(in) = NADH + NADP(+) + H(+)(out). Functionally, the transhydrogenation between NADH and NADP is coupled to respiration and ATP hydrolysis and functions as a proton pump across the membrane. May play a role in reactive oxygen species (ROS) detoxification in the adrenal gland. This is NAD(P) transhydrogenase, mitochondrial (NNT) from Bos taurus (Bovine).